A 439-amino-acid polypeptide reads, in one-letter code: Tol-Pal system protein TolB (439 aa).

The first 22 residues, 1 to 22 (MKKPLRWLAALTVLLLPLSALA), serve as a signal peptide directing secretion.

Belongs to the TolB family. In terms of assembly, the Tol-Pal system is composed of five core proteins: the inner membrane proteins TolA, TolQ and TolR, the periplasmic protein TolB and the outer membrane protein Pal. They form a network linking the inner and outer membranes and the peptidoglycan layer.

It localises to the periplasm. Part of the Tol-Pal system, which plays a role in outer membrane invagination during cell division and is important for maintaining outer membrane integrity. The polypeptide is Tol-Pal system protein TolB (Xanthomonas oryzae pv. oryzae (strain PXO99A)).